Consider the following 1053-residue polypeptide: DNA-directed RNA polymerase subunit beta' (1053 aa).

Zn(2+) is bound by residues C60, C62, C75, and C78. D449, D451, and D453 together coordinate Mg(2+).

Belongs to the RNA polymerase beta' chain family. As to quaternary structure, the RNAP catalytic core consists of 2 alpha, 1 beta, 1 beta' and 1 omega subunit. When a sigma factor is associated with the core the holoenzyme is formed, which can initiate transcription. Mg(2+) serves as cofactor. The cofactor is Zn(2+).

The enzyme catalyses RNA(n) + a ribonucleoside 5'-triphosphate = RNA(n+1) + diphosphate. DNA-dependent RNA polymerase catalyzes the transcription of DNA into RNA using the four ribonucleoside triphosphates as substrates. The protein is DNA-directed RNA polymerase subunit beta' of Brochothrix thermosphacta (Microbacterium thermosphactum).